Consider the following 749-residue polypeptide: Phosphate-regulating neutral endopeptidase PHEX (749 aa).

At 1–20 the chain is on the cytoplasmic side; it reads MEAETGSTMETGKGTNRGIR. A helical; Signal-anchor for type II membrane protein transmembrane segment spans residues 21 to 37; that stretch reads IALALFIGGTLVLGTLL. At 38-749 the chain is on the extracellular side; that stretch reads FLVSQGLLSF…NRGADSCRLW (712 aa). The region spanning 53 to 749 is the Peptidase M13 domain; sequence YCLKPECIEA…NRGADSCRLW (697 aa). Cys54 and Cys59 form a disulfide bridge. N-linked (GlcNAc...) asparagine glycans are attached at residues Asn71, Asn238, Asn263, Asn290, Asn301, Asn377, and Asn484. 4 disulfide bridges follow: Cys77/Cys733, Cys85/Cys693, Cys142/Cys406, and Cys617/Cys746. A Zn(2+)-binding site is contributed by His580. The active site involves Glu581. Zn(2+) is bound by residues His584 and Glu642. The active-site Proton donor is Asp646. An N-linked (GlcNAc...) asparagine glycan is attached at Asn736.

This sequence belongs to the peptidase M13 family. In terms of assembly, interacts with MEPE; the interaction is zinc-dependent (via ASARM motif). Zn(2+) is required as a cofactor. Post-translationally, N-glycosylated. Expressed in bone, specifically in the osteoid and in osteocytes. Expressed in teeth, specifically in odontoblasts and ameloblasts. Expressed moderately by macrophages in the liver and has minimal expression in brown adipose tissue. Also expressed in suprabasal layers of the skin.

Its subcellular location is the cell membrane. Its function is as follows. Peptidase that cleaves SIBLING (small integrin-binding ligand, N-linked glycoprotein)-derived ASARM peptides, thus regulating their biological activity. Cleaves ASARM peptides between Ser and Glu or Asp residues. Regulates osteogenic cell differentiation and bone mineralization through the cleavage of the MEPE-derived ASARM peptide. Promotes dentin mineralization and renal phosphate reabsorption by cleaving DMP1- and MEPE-derived ASARM peptides. Inhibits the cleavage of MEPE by CTSB/cathepsin B thus preventing MEPE degradation. The sequence is that of Phosphate-regulating neutral endopeptidase PHEX (Phex) from Mus musculus (Mouse).